Reading from the N-terminus, the 938-residue chain is Leucine--tRNA ligase 1 (938 aa).

The 'HIGH' region motif lies at 40–50; the sequence is PYTNSPLHIGH. The 'KMSKS' region motif lies at 620–624; sequence KMSKS. Lys623 lines the ATP pocket.

The protein belongs to the class-I aminoacyl-tRNA synthetase family.

It localises to the cytoplasm. The enzyme catalyses tRNA(Leu) + L-leucine + ATP = L-leucyl-tRNA(Leu) + AMP + diphosphate. The polypeptide is Leucine--tRNA ligase 1 (Metallosphaera sedula (strain ATCC 51363 / DSM 5348 / JCM 9185 / NBRC 15509 / TH2)).